We begin with the raw amino-acid sequence, 263 residues long: Undecaprenyl-diphosphatase 2 (263 aa).

Helical transmembrane passes span 15 to 37 (GLTE…LLGF), 42 to 62 (AKVF…VIFW), 83 to 103 (LHII…HSAI), 106 to 126 (VLFG…LMIV), 142 to 162 (ITYK…WPGF), 183 to 203 (AEYT…LDLI), 216 to 236 (LFAT…VSFL), and 242 to 262 (VKLT…YFFI).

The protein belongs to the UppP family.

The protein resides in the cell membrane. The catalysed reaction is di-trans,octa-cis-undecaprenyl diphosphate + H2O = di-trans,octa-cis-undecaprenyl phosphate + phosphate + H(+). Functionally, catalyzes the dephosphorylation of undecaprenyl diphosphate (UPP). Confers resistance to bacitracin. This Bacillus cereus (strain ATCC 10987 / NRS 248) protein is Undecaprenyl-diphosphatase 2.